A 332-amino-acid polypeptide reads, in one-letter code: Ribosomal RNA small subunit methyltransferase H (332 aa).

Residues 36 to 38, aspartate 54, phenylalanine 81, aspartate 102, and glutamine 109 contribute to the S-adenosyl-L-methionine site; that span reads GGY. The disordered stretch occupies residues 284 to 332; sequence VTAGQEEVSANPRARSAKLRAAERTAAPATADDGESPGWPSLANVMRGG.

The protein belongs to the methyltransferase superfamily. RsmH family.

It is found in the cytoplasm. It catalyses the reaction cytidine(1402) in 16S rRNA + S-adenosyl-L-methionine = N(4)-methylcytidine(1402) in 16S rRNA + S-adenosyl-L-homocysteine + H(+). Specifically methylates the N4 position of cytidine in position 1402 (C1402) of 16S rRNA. In Nitrobacter hamburgensis (strain DSM 10229 / NCIMB 13809 / X14), this protein is Ribosomal RNA small subunit methyltransferase H.